The following is a 338-amino-acid chain: Lipoate-protein ligase A (338 aa).

Residues 29-216 (PATQRVLFLW…AFFAHYGERV (188 aa)) form the BPL/LPL catalytic domain. Residues arginine 71, 76-79 (GAVF), and lysine 134 each bind ATP. Lysine 134 is a (R)-lipoate binding site.

Belongs to the LplA family. As to quaternary structure, monomer.

It is found in the cytoplasm. The catalysed reaction is L-lysyl-[lipoyl-carrier protein] + (R)-lipoate + ATP = N(6)-[(R)-lipoyl]-L-lysyl-[lipoyl-carrier protein] + AMP + diphosphate + H(+). It functions in the pathway protein modification; protein lipoylation via exogenous pathway; protein N(6)-(lipoyl)lysine from lipoate: step 1/2. Its pathway is protein modification; protein lipoylation via exogenous pathway; protein N(6)-(lipoyl)lysine from lipoate: step 2/2. In terms of biological role, catalyzes both the ATP-dependent activation of exogenously supplied lipoate to lipoyl-AMP and the transfer of the activated lipoyl onto the lipoyl domains of lipoate-dependent enzymes. The polypeptide is Lipoate-protein ligase A (Escherichia coli (strain K12 / MC4100 / BW2952)).